Here is a 596-residue protein sequence, read N- to C-terminus: Transketolase-like protein 1 (596 aa).

His-46 lines the substrate pocket. Thiamine diphosphate contacts are provided by residues Ser-49 and 94–96 (GWL). Residue Asp-126 coordinates Mg(2+). Val-127 and Asn-156 together coordinate thiamine diphosphate. Residues Asn-156 and Leu-158 each coordinate Mg(2+). The thiamine diphosphate site is built by Lys-218 and His-232. Substrate-binding residues include His-232, Arg-292, and Ser-319. Residues Glu-340 and Phe-366 each contribute to the thiamine diphosphate site. Glu-340 functions as the Proton donor in the catalytic mechanism. The substrate site is built by His-390 and Asp-398. Gln-402 contacts thiamine diphosphate. Arg-448 lines the substrate pocket.

It belongs to the transketolase family. Homodimer. Mg(2+) is required as a cofactor. Ca(2+) serves as cofactor. The cofactor is Mn(2+). It depends on Co(2+) as a cofactor. Requires thiamine diphosphate as cofactor.

The protein resides in the cytoplasm. It carries out the reaction D-sedoheptulose 7-phosphate + D-glyceraldehyde 3-phosphate = aldehydo-D-ribose 5-phosphate + D-xylulose 5-phosphate. Catalyzes the transfer of a two-carbon ketol group from a ketose donor to an aldose acceptor, via a covalent intermediate with the cofactor thiamine pyrophosphate. This chain is Transketolase-like protein 1 (TKTL1), found in Bos taurus (Bovine).